We begin with the raw amino-acid sequence, 161 residues long: Nucleotide-binding protein Reut_A2760 (161 aa).

Belongs to the YajQ family.

Functionally, nucleotide-binding protein. This is Nucleotide-binding protein Reut_A2760 from Cupriavidus pinatubonensis (strain JMP 134 / LMG 1197) (Cupriavidus necator (strain JMP 134)).